The primary structure comprises 487 residues: Probable Xaa-Pro aminopeptidase CPSG_02684 (487 aa).

Residues 1-10 (MAGSNTLSSS) are compositionally biased toward polar residues. The interval 1–22 (MAGSNTLSSSEHGDDPRGHSYS) is disordered. 4 residues coordinate Mn(2+): aspartate 275, aspartate 286, glutamate 421, and glutamate 460.

Belongs to the peptidase M24B family. Mn(2+) serves as cofactor.

The catalysed reaction is Release of any N-terminal amino acid, including proline, that is linked to proline, even from a dipeptide or tripeptide.. Functionally, catalyzes the removal of a penultimate prolyl residue from the N-termini of peptides. This is Probable Xaa-Pro aminopeptidase CPSG_02684 from Coccidioides posadasii (strain RMSCC 757 / Silveira) (Valley fever fungus).